The primary structure comprises 225 residues: 7-cyano-7-deazaguanine synthase (225 aa).

Residue 9–19 participates in ATP binding; the sequence is YSGGLDSTTCL. C188, C198, C201, and C204 together coordinate Zn(2+).

It belongs to the QueC family. Requires Zn(2+) as cofactor.

The catalysed reaction is 7-carboxy-7-deazaguanine + NH4(+) + ATP = 7-cyano-7-deazaguanine + ADP + phosphate + H2O + H(+). The protein operates within purine metabolism; 7-cyano-7-deazaguanine biosynthesis. In terms of biological role, catalyzes the ATP-dependent conversion of 7-carboxy-7-deazaguanine (CDG) to 7-cyano-7-deazaguanine (preQ(0)). The sequence is that of 7-cyano-7-deazaguanine synthase from Geobacter sp. (strain M21).